A 634-amino-acid polypeptide reads, in one-letter code: Sodium-dependent multivitamin transporter (634 aa).

12 helical membrane-spanning segments follow: residues 23–43 (FSVV…VIGL), 65–85 (MGCL…VAIL), 100–120 (FLGC…IPVF), 142–162 (ICGT…ALYA), 175–195 (LWLS…LGGL), 207–227 (LVMF…VGGL), 255–275 (FWTL…VNQA), 295–315 (AVFP…LVMF), 350–370 (LPGL…SSAF), 403–423 (FAYG…GSVL), 427–447 (LSIF…GLFF), and 455–475 (AIVG…GSIV). 2 N-linked (GlcNAc...) asparagine glycosylation sites follow: asparagine 488 and asparagine 497. Residues 526 to 546 (LWYSAHNSTTVIVVGLIVSLL) traverse the membrane as a helical segment.

Belongs to the sodium:solute symporter (SSF) (TC 2.A.21) family. Interacts with PDZD11. As to expression, expressed in the intestinal mucosa, liver and kidney (at protein level). Expressed in the colon.

It localises to the cell membrane. The protein localises to the apical cell membrane. The catalysed reaction is biotin(out) + 2 Na(+)(out) = biotin(in) + 2 Na(+)(in). It carries out the reaction (R)-pantothenate(out) + 2 Na(+)(out) = (R)-pantothenate(in) + 2 Na(+)(in). The enzyme catalyses (R)-lipoate(out) + 2 Na(+)(out) = (R)-lipoate(in) + 2 Na(+)(in). It catalyses the reaction iodide(out) + 2 Na(+)(out) = iodide(in) + 2 Na(+)(in). Its function is as follows. Sodium-dependent multivitamin transporter that mediates the electrogenic transport of pantothenate, biotin, lipoate and iodide. Functions as a Na(+)-coupled substrate symporter where the stoichiometry of Na(+):substrate is 2:1, creating an electrochemical Na(+) gradient used as driving force for substrate uptake. Required for biotin and pantothenate uptake in the intestine across the brush border membrane. Plays a role in the maintenance of intestinal mucosa integrity, by providing the gut mucosa with biotin. Contributes to the luminal uptake of biotin and pantothenate into the brain across the blood-brain barrier. This is Sodium-dependent multivitamin transporter from Mus musculus (Mouse).